Consider the following 531-residue polypeptide: NAD(P)H-quinone oxidoreductase chain 4 (531 aa).

Helical transmembrane passes span 9-29, 41-61, 93-113, 117-137, 141-161, 173-193, 217-237, 248-268, 282-302, 311-331, 337-357, 381-401, 422-442, and 469-489; these read FPWL…IPFF, FALS…INGF, MPLI…AWPV, PKLF…VFAV, LLFF…LAIW, FIIY…AMGF, IFCY…VPLH, TAPV…YALL, FAPL…LTSF, IAYS…SFSS, AMLQ…LVGA, FALW…SGFV, VVMA…LLSM, and VYII…PRLV.

It belongs to the complex I subunit 4 family.

It localises to the cellular thylakoid membrane. The catalysed reaction is a plastoquinone + NADH + (n+1) H(+)(in) = a plastoquinol + NAD(+) + n H(+)(out). The enzyme catalyses a plastoquinone + NADPH + (n+1) H(+)(in) = a plastoquinol + NADP(+) + n H(+)(out). Functionally, NDH-1 shuttles electrons from NAD(P)H, via FMN and iron-sulfur (Fe-S) centers, to quinones in the respiratory chain. The immediate electron acceptor for the enzyme in this species is believed to be plastoquinone. Couples the redox reaction to proton translocation (for every two electrons transferred, four hydrogen ions are translocated across the cytoplasmic membrane), and thus conserves the redox energy in a proton gradient. This chain is NAD(P)H-quinone oxidoreductase chain 4, found in Prochlorococcus marinus (strain MIT 9301).